Here is a 216-residue protein sequence, read N- to C-terminus: Large ribosomal subunit protein uL1y (216 aa).

Belongs to the universal ribosomal protein uL1 family. Interacts with the GTPase NUG2.

The polypeptide is Large ribosomal subunit protein uL1y (RPL10AB) (Arabidopsis thaliana (Mouse-ear cress)).